The chain runs to 230 residues: 2,3-bisphosphoglycerate-dependent phosphoglycerate mutase 1 (230 aa).

Residues 8–15 (RHGQSEWN), 21–22 (TG), Arg60, 87–90 (ERHY), Lys98, 114–115 (RR), and 183–184 (GN) each bind substrate. His9 functions as the Tele-phosphohistidine intermediate in the catalytic mechanism. The active-site Proton donor/acceptor is the Glu87.

This sequence belongs to the phosphoglycerate mutase family. BPG-dependent PGAM subfamily.

The catalysed reaction is (2R)-2-phosphoglycerate = (2R)-3-phosphoglycerate. Its pathway is carbohydrate degradation; glycolysis; pyruvate from D-glyceraldehyde 3-phosphate: step 3/5. Catalyzes the interconversion of 2-phosphoglycerate and 3-phosphoglycerate. This is 2,3-bisphosphoglycerate-dependent phosphoglycerate mutase 1 from Lactobacillus johnsonii (strain CNCM I-12250 / La1 / NCC 533).